We begin with the raw amino-acid sequence, 843 residues long: Protein kintoun (843 aa).

Disordered stretches follow at residues 212–242 (PTAEQLEPHPLQNIYPTAPPTSNPEPRVHPM), 371–417 (FSRE…PVHS), 545–672 (YTVK…GASQ), and 761–843 (KKNQ…DDVM). Ser376 carries the post-translational modification Phosphoserine. A compositionally biased stretch (acidic residues) spans 387–397 (PVEEEEADADL). Positions 564–573 (VKFDHNKESL) are enriched in basic and acidic residues. The segment covering 584 to 593 (TEEDEVEEQH) has biased composition (acidic residues). The segment covering 605–619 (QNKKPSKKQRKRNKK) has biased composition (basic residues). Residues 658 to 671 (YSECNDSSVGSGAS) are compositionally biased toward polar residues. Residues 761 to 775 (KKNQKRRDLKLRAQQ) are compositionally biased toward basic residues. Ser779 bears the Phosphoserine mark.

Belongs to the PIH1 family. Kintoun subfamily. As to quaternary structure, interacts with Pp1alpha-96A, Pp1-87B, Pp1-13C and flw.

Its subcellular location is the cytoplasm. In terms of biological role, required for cytoplasmic pre-assembly of axonemal dyneins, thereby playing a central role in motility in cilia and flagella. Involved in pre-assembly of dynein arm complexes in the cytoplasm before intraflagellar transport loads them for the ciliary compartment. This chain is Protein kintoun, found in Drosophila ananassae (Fruit fly).